The sequence spans 384 residues: uncharacterized protein (384 aa).

Residues 1-116 (MTEMPKKKFS…FPAAPPPMDS (116 aa)) form a disordered region. Composition is skewed to basic and acidic residues over residues 14–70 (ARGD…RAGD) and 78–95 (RFKD…DRPR). The S-adenosyl-L-methionine site is built by Gly-318, Ile-338, and Leu-347.

It belongs to the class IV-like SAM-binding methyltransferase superfamily. RNA methyltransferase TrmH family.

This is an uncharacterized protein from Synechocystis sp. (strain ATCC 27184 / PCC 6803 / Kazusa).